Here is a 222-residue protein sequence, read N- to C-terminus: V-type ATP synthase subunit D (222 aa).

It belongs to the V-ATPase D subunit family.

Produces ATP from ADP in the presence of a proton gradient across the membrane. This is V-type ATP synthase subunit D from Clostridioides difficile (strain 630) (Peptoclostridium difficile).